The primary structure comprises 387 residues: Protein RecA (387 aa).

Residue 78–85 participates in ATP binding; it reads GPESSGKT. Residues 350–369 show a composition bias toward basic and acidic residues; it reads QTREVKSIERDPKETKETKS. Residues 350 to 387 form a disordered region; it reads QTREVKSIERDPKETKETKSKQPVSFSTEAEVDIAVGE.

The protein belongs to the RecA family.

The protein localises to the cytoplasm. Its function is as follows. Can catalyze the hydrolysis of ATP in the presence of single-stranded DNA, the ATP-dependent uptake of single-stranded DNA by duplex DNA, and the ATP-dependent hybridization of homologous single-stranded DNAs. It interacts with LexA causing its activation and leading to its autocatalytic cleavage. The sequence is that of Protein RecA from Leptospira meyeri.